We begin with the raw amino-acid sequence, 116 residues long: Ribosome-binding factor A (116 aa).

The protein belongs to the RbfA family. Monomer. Binds 30S ribosomal subunits, but not 50S ribosomal subunits or 70S ribosomes.

Its subcellular location is the cytoplasm. Functionally, one of several proteins that assist in the late maturation steps of the functional core of the 30S ribosomal subunit. Associates with free 30S ribosomal subunits (but not with 30S subunits that are part of 70S ribosomes or polysomes). Required for efficient processing of 16S rRNA. May interact with the 5'-terminal helix region of 16S rRNA. The chain is Ribosome-binding factor A from Staphylococcus aureus (strain JH9).